The sequence spans 876 residues: Alanine--tRNA ligase (876 aa).

Zn(2+) is bound by residues His565, His569, Cys667, and His671.

It belongs to the class-II aminoacyl-tRNA synthetase family. Zn(2+) is required as a cofactor.

The protein localises to the cytoplasm. It catalyses the reaction tRNA(Ala) + L-alanine + ATP = L-alanyl-tRNA(Ala) + AMP + diphosphate. Catalyzes the attachment of alanine to tRNA(Ala) in a two-step reaction: alanine is first activated by ATP to form Ala-AMP and then transferred to the acceptor end of tRNA(Ala). Also edits incorrectly charged Ser-tRNA(Ala) and Gly-tRNA(Ala) via its editing domain. This is Alanine--tRNA ligase from Desulfosudis oleivorans (strain DSM 6200 / JCM 39069 / Hxd3) (Desulfococcus oleovorans).